Reading from the N-terminus, the 226-residue chain is Cytochrome c oxidase subunit 2 (226 aa).

Residues 1 to 14 lie on the Mitochondrial intermembrane side of the membrane; it reads MAYPLQLGLQDATS. A helical transmembrane segment spans residues 15–45; that stretch reads PIMEELTSFHDHTLMIVFLISTLVLYIISLM. Residues 46-59 are Mitochondrial matrix-facing; sequence LTTKLTHTSTMDAQ. A helical transmembrane segment spans residues 60–87; the sequence is EIETIWTILPAIILIMIALPSLRVLYMM. Residues 88-226 lie on the Mitochondrial intermembrane side of the membrane; the sequence is DEINNPALTV…KYFEAWSASM (139 aa). Residues His-161, Cys-196, Glu-198, Cys-200, His-204, and Met-207 each contribute to the Cu cation site. Mg(2+) is bound at residue Glu-198. Tyr-218 is subject to Phosphotyrosine.

This sequence belongs to the cytochrome c oxidase subunit 2 family. Component of the cytochrome c oxidase (complex IV, CIV), a multisubunit enzyme composed of 14 subunits. The complex is composed of a catalytic core of 3 subunits MT-CO1, MT-CO2 and MT-CO3, encoded in the mitochondrial DNA, and 11 supernumerary subunits COX4I, COX5A, COX5B, COX6A, COX6B, COX6C, COX7A, COX7B, COX7C, COX8 and NDUFA4, which are encoded in the nuclear genome. The complex exists as a monomer or a dimer and forms supercomplexes (SCs) in the inner mitochondrial membrane with NADH-ubiquinone oxidoreductase (complex I, CI) and ubiquinol-cytochrome c oxidoreductase (cytochrome b-c1 complex, complex III, CIII), resulting in different assemblies (supercomplex SCI(1)III(2)IV(1) and megacomplex MCI(2)III(2)IV(2)). Found in a complex with TMEM177, COA6, COX18, COX20, SCO1 and SCO2. Interacts with TMEM177 in a COX20-dependent manner. Interacts with COX20. Interacts with COX16. Cu cation is required as a cofactor.

It localises to the mitochondrion inner membrane. It catalyses the reaction 4 Fe(II)-[cytochrome c] + O2 + 8 H(+)(in) = 4 Fe(III)-[cytochrome c] + 2 H2O + 4 H(+)(out). In terms of biological role, component of the cytochrome c oxidase, the last enzyme in the mitochondrial electron transport chain which drives oxidative phosphorylation. The respiratory chain contains 3 multisubunit complexes succinate dehydrogenase (complex II, CII), ubiquinol-cytochrome c oxidoreductase (cytochrome b-c1 complex, complex III, CIII) and cytochrome c oxidase (complex IV, CIV), that cooperate to transfer electrons derived from NADH and succinate to molecular oxygen, creating an electrochemical gradient over the inner membrane that drives transmembrane transport and the ATP synthase. Cytochrome c oxidase is the component of the respiratory chain that catalyzes the reduction of oxygen to water. Electrons originating from reduced cytochrome c in the intermembrane space (IMS) are transferred via the dinuclear copper A center (CU(A)) of subunit 2 and heme A of subunit 1 to the active site in subunit 1, a binuclear center (BNC) formed by heme A3 and copper B (CU(B)). The BNC reduces molecular oxygen to 2 water molecules using 4 electrons from cytochrome c in the IMS and 4 protons from the mitochondrial matrix. The protein is Cytochrome c oxidase subunit 2 (MT-CO2) of Perognathus flavus (Silky pocket mouse).